Here is a 354-residue protein sequence, read N- to C-terminus: Guanine nucleotide-binding protein subunit alpha-14 (354 aa).

The 322-residue stretch at 33–354 folds into the G-alpha domain; sequence RELKLLLLGT…QLNLREFNLV (322 aa). Residues 36 to 49 are G1 motif; sequence KLLLLGTGESGKST. GTP is bound by residues 41-48, 175-181, 200-204, 269-272, and Ala326; these read GTGESGKS, LRVRVPT, DVGGQ, and NKKD. Mg(2+) is bound by residues Ser48 and Thr181. The tract at residues 173–181 is G2 motif; that stretch reads DVLRVRVPT. The tract at residues 196–205 is G3 motif; sequence FRMVDVGGQR. Residues 265–272 form a G4 motif region; that stretch reads ILFLNKKD. A G5 motif region spans residues 324–329; it reads TCATDT.

It belongs to the G-alpha family. G(q) subfamily. As to quaternary structure, g proteins are composed of 3 units; alpha, beta and gamma. The alpha chain contains the guanine nucleotide binding site.

Guanine nucleotide-binding proteins (G proteins) are involved as modulators or transducers in various transmembrane signaling systems. Acts as an activator of phospholipase C. Mediates responses to trypsin. This is Guanine nucleotide-binding protein subunit alpha-14 (gna14) from Xenopus laevis (African clawed frog).